Reading from the N-terminus, the 86-residue chain is uncharacterized protein (86 aa).

Positions 1 to 31 (MKQKLLLSGLAVSTVGITSYLLKDPSNRQKA) are cleaved as a signal peptide. The interval 46–69 (PDMETFPVDKAGHPDPQDIEDNKM) is disordered. Residues 55 to 69 (KAGHPDPQDIEDNKM) show a composition bias toward basic and acidic residues.

This is an uncharacterized protein from Bacillus subtilis (strain 168).